The chain runs to 256 residues: 3-deoxy-manno-octulosonate cytidylyltransferase (256 aa).

It belongs to the KdsB family.

Its subcellular location is the cytoplasm. It carries out the reaction 3-deoxy-alpha-D-manno-oct-2-ulosonate + CTP = CMP-3-deoxy-beta-D-manno-octulosonate + diphosphate. The protein operates within nucleotide-sugar biosynthesis; CMP-3-deoxy-D-manno-octulosonate biosynthesis; CMP-3-deoxy-D-manno-octulosonate from 3-deoxy-D-manno-octulosonate and CTP: step 1/1. It functions in the pathway bacterial outer membrane biogenesis; lipopolysaccharide biosynthesis. Activates KDO (a required 8-carbon sugar) for incorporation into bacterial lipopolysaccharide in Gram-negative bacteria. In Histophilus somni (strain 2336) (Haemophilus somnus), this protein is 3-deoxy-manno-octulosonate cytidylyltransferase.